We begin with the raw amino-acid sequence, 356 residues long: Branched-chain-amino-acid aminotransferase 6 (356 aa).

Lys-199 carries the N6-(pyridoxal phosphate)lysine modification.

This sequence belongs to the class-IV pyridoxal-phosphate-dependent aminotransferase family. Pyridoxal 5'-phosphate is required as a cofactor.

The protein resides in the cytoplasm. The enzyme catalyses L-leucine + 2-oxoglutarate = 4-methyl-2-oxopentanoate + L-glutamate. It catalyses the reaction L-isoleucine + 2-oxoglutarate = (S)-3-methyl-2-oxopentanoate + L-glutamate. The catalysed reaction is L-valine + 2-oxoglutarate = 3-methyl-2-oxobutanoate + L-glutamate. It participates in amino-acid biosynthesis; L-isoleucine biosynthesis; L-isoleucine from 2-oxobutanoate: step 4/4. Its pathway is amino-acid biosynthesis; L-leucine biosynthesis; L-leucine from 3-methyl-2-oxobutanoate: step 4/4. It functions in the pathway amino-acid biosynthesis; L-valine biosynthesis; L-valine from pyruvate: step 4/4. In terms of biological role, converts 2-oxo acids to branched-chain amino acids. Acts on leucine, isoleucine and valine. The polypeptide is Branched-chain-amino-acid aminotransferase 6 (BCAT6) (Arabidopsis thaliana (Mouse-ear cress)).